The primary structure comprises 333 residues: Fructose-1,6-bisphosphatase class 1 (333 aa).

Mg(2+) is bound by residues Glu92, Asp113, Leu115, and Asp116. Substrate contacts are provided by residues 116–119 (DGSS), Asn209, Tyr242, and Lys272. Mg(2+) is bound at residue Glu278.

The protein belongs to the FBPase class 1 family. Homotetramer. Mg(2+) serves as cofactor.

It is found in the cytoplasm. The enzyme catalyses beta-D-fructose 1,6-bisphosphate + H2O = beta-D-fructose 6-phosphate + phosphate. It participates in carbohydrate biosynthesis; Calvin cycle. The chain is Fructose-1,6-bisphosphatase class 1 from Chlorobium phaeobacteroides (strain BS1).